Consider the following 246-residue polypeptide: Probable transcriptional regulatory protein Rmag_0394 (246 aa).

The protein belongs to the TACO1 family.

It localises to the cytoplasm. This Ruthia magnifica subsp. Calyptogena magnifica protein is Probable transcriptional regulatory protein Rmag_0394.